Here is a 350-residue protein sequence, read N- to C-terminus: MSDAVHTGWQLSEQAPLRALNTFHVEATARWLLNVHAPEALPQALAAPEIAGQPLLVLGSGSNVLLAGDPPGCVLCFDNRQTSIIAHRADHAIVRAGAGVNWHALVLYSLQQGLSGLENLALIPGTVGACPIQNIGAYGAQVGDFIHVVEAFDRHSQQFVRLDAADCAFGYRDSVFKQQPERYLIVAVEFNLPLLHELRLDYAGIREELARMGAELAGAADVAQAVINIRRRKLPDPDVLGNAGSFFKNPLLPSEQIAALQASFADMPVYPGEQAGQGKLSAAWLIEQCGWKGRREGDAGVSPEHALVLVNYGTATGAQLLDFARRIAESVRERYSVILEPEPRIIGAHW.

The FAD-binding PCMH-type domain occupies 24–195 (HVEATARWLL…VAVEFNLPLL (172 aa)). Arg-172 is an active-site residue. The Proton donor role is filled by Ser-245. Residue Glu-342 is part of the active site.

This sequence belongs to the MurB family. FAD is required as a cofactor.

It is found in the cytoplasm. It carries out the reaction UDP-N-acetyl-alpha-D-muramate + NADP(+) = UDP-N-acetyl-3-O-(1-carboxyvinyl)-alpha-D-glucosamine + NADPH + H(+). Its pathway is cell wall biogenesis; peptidoglycan biosynthesis. In terms of biological role, cell wall formation. The protein is UDP-N-acetylenolpyruvoylglucosamine reductase of Xanthomonas euvesicatoria pv. vesicatoria (strain 85-10) (Xanthomonas campestris pv. vesicatoria).